The following is a 492-amino-acid chain: Protein odr-4 homolog (492 aa).

The interval 251-270 (LQPTSTTGGTATASSNTTDS) is disordered. The span at 254 to 268 (TSTTGGTATASSNTT) shows a compositional bias: low complexity. The chain crosses the membrane as a helical span at residues 469–489 (MVGIAVALLVLLSSVALHFVL).

It belongs to the ODR-4 family.

It is found in the membrane. May play a role in the trafficking of a subset of G-protein coupled receptors. In Drosophila melanogaster (Fruit fly), this protein is Protein odr-4 homolog.